We begin with the raw amino-acid sequence, 294 residues long: Cytidine deaminase (294 aa).

CMP/dCMP-type deaminase domains lie at 48 to 168 (DEDA…FGPK) and 186 to 294 (LTGD…VLLA). A substrate-binding site is contributed by 89-91 (NME). Residue His-102 coordinates Zn(2+). Residue Glu-104 is the Proton donor of the active site. The Zn(2+) site is built by Cys-129 and Cys-132.

Belongs to the cytidine and deoxycytidylate deaminase family. Homodimer. Zn(2+) serves as cofactor.

The enzyme catalyses cytidine + H2O + H(+) = uridine + NH4(+). It carries out the reaction 2'-deoxycytidine + H2O + H(+) = 2'-deoxyuridine + NH4(+). Functionally, this enzyme scavenges exogenous and endogenous cytidine and 2'-deoxycytidine for UMP synthesis. The protein is Cytidine deaminase of Escherichia coli (strain K12).